Consider the following 698-residue polypeptide: Putative transposon gamma-delta 80.3 kDa protein (698 aa).

In Escherichia coli (strain K12), this protein is Putative transposon gamma-delta 80.3 kDa protein (tnpX).